We begin with the raw amino-acid sequence, 290 residues long: uncharacterized protein (290 aa).

The segment at 67–210 (LPAAPEAPGD…QPSPKNPTKS (144 aa)) is disordered. Over residues 121-130 (RPQETQEGHR) the composition is skewed to basic and acidic residues. Positions 181 to 190 (AAQAAAAATA) are enriched in low complexity. A compositionally biased stretch (polar residues) spans 191–200 (NPGSQTQTPL).

This is an uncharacterized protein from Homo sapiens (Human).